We begin with the raw amino-acid sequence, 708 residues long: Lactotransferrin (708 aa).

An N-terminal signal peptide occupies residues 1 to 19 (MKLLFLALLSLLALGPSLA). 2 Transferrin-like domains span residues 25-352 (VRWC…NLKE) and 364-693 (VVWC…NLRQ). 2 disulfides stabilise this stretch: C28-C64 and C38-C55. D79 provides a ligand contact to Fe(3+). R92 is an active-site residue. Y111 contributes to the Fe(3+) binding site. Intrachain disulfides connect C134–C217, C176–C192, C179–C202, C189–C200, and C250–C264. T136 is a hydrogencarbonate binding site. N139 carries N-linked (GlcNAc...) asparagine glycosylation. The hydrogencarbonate site is built by R140, A142, and G143. Fe(3+) is bound at residue Y211. Residue H272 participates in Fe(3+) binding. S278 acts as the Nucleophile in catalysis. Intrachain disulfides connect C367–C399 and C377–C390. An N-linked (GlcNAc...) asparagine glycan is attached at N385. Residues D414 and D452 each contribute to the Fe(3+) site. 4 disulfides stabilise this stretch: C476-C551, C510-C524, C521-C534, and C592-C606. The hydrogencarbonate site is built by T478, R482, A484, and G485. An N-linked (GlcNAc...) asparagine glycan is attached at N495. Y545 provides a ligand contact to Fe(3+). H614 contributes to the Fe(3+) binding site.

This sequence belongs to the transferrin family. Monomer. Found in a complex with LTF, CLU, EPPIN and SEMG1. Interacts with prey activated coagulation factor X; the interaction inhibits coagulation factor X catalytic activity. Found in a complex with MPO and LTF; interacts directly with CP, allows Fe(3+) incorporation into LTF and activation of CP ferroxidase activity. Post-translationally, N-glycosylated. Glycosylation is important for draculin anticoagulant activity. Probably also O-glycosylated. In terms of tissue distribution, expressed in the submaxillary gland and secreted in the saliva (at protein level).

The protein resides in the secreted. Its function is as follows. Transferrins are iron binding transport proteins which can bind two Fe(3+) ions in association with the binding of an anion, usually bicarbonate. In terms of biological role, major iron-binding and multifunctional protein found in exocrine fluids such as breast milk and mucosal secretions. Has antimicrobial activity. Antimicrobial properties may include bacteriostasis, which is related to its ability to sequester free iron and thus inhibit microbial growth, as well as direct bactericidal properties leading to the release of lipopolysaccharides from the bacterial outer membrane. May have anabolic, differentiating and anti-apoptotic effects on osteoblasts and may also inhibit osteoclastogenesis, possibly playing a role in the regulation of bone growth. May interfere with the lipopolysaccharide (LPS)-stimulated TLR4 signaling. Functionally, the lactotransferrin transferrin-like domain 1 functions as a serine protease of the peptidase S60 family that cuts arginine rich regions. This function contributes to the antimicrobial activity. Shows a preferential cleavage at -Arg-Ser-Arg-Arg-|- and -Arg-Arg-Ser-Arg-|-, and of Z-Phe-Arg-|-aminomethylcoumarin sites. Acts as an anticoagulant of the blood coagulation cascade of the bat's prey by inhibiting coagulation factor IX and activated coagulation factor X. The protein is Lactotransferrin of Desmodus rotundus (Vampire bat).